A 351-amino-acid chain; its full sequence is tRNA-splicing endonuclease (351 aa).

Residues Tyr-287, His-298, and Lys-329 contribute to the active site.

Belongs to the tRNA-intron endonuclease family. Archaeal long subfamily. Homodimer.

The catalysed reaction is pretRNA = a 3'-half-tRNA molecule with a 5'-OH end + a 5'-half-tRNA molecule with a 2',3'-cyclic phosphate end + an intron with a 2',3'-cyclic phosphate and a 5'-hydroxyl terminus.. Its function is as follows. Endonuclease that removes tRNA introns. Cleaves pre-tRNA at the 5'- and 3'-splice sites to release the intron. The products are an intron and two tRNA half-molecules bearing 2',3' cyclic phosphate and 5'-OH termini. Recognizes a pseudosymmetric substrate in which 2 bulged loops of 3 bases are separated by a stem of 4 bp. The chain is tRNA-splicing endonuclease from Methanococcoides burtonii (strain DSM 6242 / NBRC 107633 / OCM 468 / ACE-M).